The following is a 98-amino-acid chain: Small ribosomal subunit protein eS24 (98 aa).

The tract at residues 76-98 is disordered; it reads GRQRTERSYLLNRGEPKKEEEEA. Over residues 89–98 the composition is skewed to basic and acidic residues; the sequence is GEPKKEEEEA.

It belongs to the eukaryotic ribosomal protein eS24 family.

The chain is Small ribosomal subunit protein eS24 from Methanosphaerula palustris (strain ATCC BAA-1556 / DSM 19958 / E1-9c).